A 341-amino-acid chain; its full sequence is KH domain-containing RNA-binding protein QKI (341 aa).

The interval Pro11–Leu82 is qua1 domain; involved in homodimerization. One can recognise a KH domain in the interval Tyr87–Val153. The tract at residues Ala182–Ala213 is qua2 domain; involved in RNA binding. Ser188 is subject to Phosphoserine. Arg227 bears the Omega-N-methylarginine mark. Residue Arg242 is modified to Asymmetric dimethylarginine; by CARM1; alternate. Arg242 is subject to Omega-N-methylarginine; alternate. Residue Arg256 is modified to Omega-N-methylarginine. The SH3-binding motif lies at Pro276–Pro279. A Nuclear localization signal motif is present at residues Arg324–Arg330.

The protein belongs to the quaking family. In terms of assembly, homodimer; does not require RNA to homodimerize. Able to heterodimerize with BICC1. In terms of processing, methylated by PRMT1. Tyrosine phosphorylated at its C-terminus, probably by FYN. Phosphorylation leads to decreased mRNA-binding affinity, affecting transport and/or stabilization of MBP mRNA. Post-translationally, ubiquitinated by RNF6 in macrophages, leading to its degradation. In terms of tissue distribution, present in myelinating oligodendrocytes (at protein level).

It localises to the nucleus. The protein resides in the cytoplasm. RNA reader protein, which recognizes and binds specific RNAs, thereby regulating RNA metabolic processes, such as pre-mRNA splicing, circular RNA (circRNA) formation, mRNA export, mRNA stability and/or translation. Involved in various cellular processes, such as mRNA storage into stress granules, apoptosis, lipid deposition, interferon response, glial cell fate and development. Binds to the 5'-NACUAAY-N(1,20)-UAAY-3' RNA core sequence. Acts as a mRNA modification reader that specifically recognizes and binds mRNA transcripts modified by internal N(7)-methylguanine (m7G). Promotes the formation of circular RNAs (circRNAs) during the epithelial to mesenchymal transition and in cardiomyocytes: acts by binding to sites flanking circRNA-forming exons. CircRNAs are produced by back-splicing circularization of pre-mRNAs. Plays a central role in myelinization via 3 distinct mechanisms. First, acts by protecting and promoting stability of target mRNAs such as MBP, SIRT2 and CDKN1B, which promotes oligodendrocyte differentiation. Second, participates in mRNA transport by regulating the nuclear export of MBP mRNA. Finally, indirectly regulates mRNA splicing of MAG pre-mRNA during oligodendrocyte differentiation by acting as a negative regulator of MAG exon 12 alternative splicing: acts by binding to HNRNPA1 mRNA splicing factor, preventing its translation. Involved in microglia differentiation and remyelination by regulating microexon alternative splicing of the Rho GTPase pathway. Involved in macrophage differentiation: promotes monocyte differentiation by regulating pre-mRNA splicing in naive peripheral blood monocytes. Acts as an important regulator of muscle development: required for the contractile function of cardiomyocytes by regulating alternative splicing of cardiomyocyte transcripts. Acts as a negative regulator of thermogenesis by decreasing stability, nuclear export and translation of mRNAs encoding PPARGC1A and UCP1. Also required for visceral endoderm function and blood vessel development. May also play a role in smooth muscle development. In addition to its RNA-binding activity, also acts as a nuclear transcription coactivator for SREBF2/SREBP2. The protein is KH domain-containing RNA-binding protein QKI of Rattus norvegicus (Rat).